The chain runs to 250 residues: MSHNFHVIIPARYHSSRFPGKLLQEINGITVIERVYRQALLAEPMSVIIATDHDEIADRAIQFGAEVVITSHTHQTGTDRIAEVVAKGSFAPDDVIVNVQGDEPFIRPQLIQQVACSLTKTKAPVSTLCWPISSLQILNNPNVVKVVRTRDNHALYFSRSAIPFHRDDKNAYSNTFRHIGLYAYRAAFLLEFVSWPPCTLEQIECLEQLRILWSGFSIRVEEACEEPLQDINTKEDLILAQQYFLDTFNV.

The protein belongs to the KdsB family.

The protein localises to the cytoplasm. It carries out the reaction 3-deoxy-alpha-D-manno-oct-2-ulosonate + CTP = CMP-3-deoxy-beta-D-manno-octulosonate + diphosphate. It participates in nucleotide-sugar biosynthesis; CMP-3-deoxy-D-manno-octulosonate biosynthesis; CMP-3-deoxy-D-manno-octulosonate from 3-deoxy-D-manno-octulosonate and CTP: step 1/1. It functions in the pathway bacterial outer membrane biogenesis; lipopolysaccharide biosynthesis. Its function is as follows. Activates KDO (a required 8-carbon sugar) for incorporation into bacterial lipopolysaccharide in Gram-negative bacteria. The protein is 3-deoxy-manno-octulosonate cytidylyltransferase of Legionella pneumophila (strain Lens).